Here is a 327-residue protein sequence, read N- to C-terminus: tRNA uridine(34) hydroxylase (327 aa).

One can recognise a Rhodanese domain in the interval 123 to 217 (SDPEVLVVDT…YLEEVPQEQS (95 aa)). Cys177 serves as the catalytic Cysteine persulfide intermediate.

Belongs to the TrhO family.

It carries out the reaction uridine(34) in tRNA + AH2 + O2 = 5-hydroxyuridine(34) in tRNA + A + H2O. Catalyzes oxygen-dependent 5-hydroxyuridine (ho5U) modification at position 34 in tRNAs. The chain is tRNA uridine(34) hydroxylase from Vibrio cholerae serotype O1 (strain ATCC 39315 / El Tor Inaba N16961).